The following is a 155-amino-acid chain: RxLR effector protein 24 (155 aa).

Positions 1 to 21 (MRLLIWVLFVTLVTFVSNTTA) are cleaved as a signal peptide. The short motif at 52 to 78 (RFLRTESKNDLKSDADTNGIDIEDEER) is the RxLR-dEER element. The segment at 105 to 155 (EKAFQRMNQKGETPTTLAKRLDIGKTAEKRFEKTYEKYTAWWINHHTNAGT) is RABA-binding domain.

Belongs to the RxLR effector family. Interacts with Arabidopsis thaliana RABA GTPases including RABA1a, RABA1b, RABA1c, RABA1d, RABA1f, RABA2a, RABA2c, RABA2d, RABA4a, RABA4b and RABA4c.

Its subcellular location is the secreted. The protein resides in the host cell membrane. It localises to the host endomembrane system. Functionally, effector protein that contributes to pathogen virulence. Targets members of the RABA GTPases subfamily to inhibit vesicular secretion, leading to an accumulation of secretory proteins in the endoplasmic reticulum. The protein is RxLR effector protein 24 of Phytophthora brassicae.